Reading from the N-terminus, the 180-residue chain is Cytidylate kinase (180 aa).

Residue 7 to 15 (GLPGSGTTT) coordinates ATP.

This sequence belongs to the cytidylate kinase family. Type 2 subfamily.

It localises to the cytoplasm. It carries out the reaction CMP + ATP = CDP + ADP. The enzyme catalyses dCMP + ATP = dCDP + ADP. The protein is Cytidylate kinase of Methanosarcina barkeri (strain Fusaro / DSM 804).